The primary structure comprises 77 residues: MKEQKWIHEGLITESLPNGMFRVRLDNEDLILGYVSGKIRRSFIRILPGDRVKIEVSRYDSTRGRIIYRLRNKDSKD.

Residues 1–71 (MKEQKWIHEG…TRGRIIYRLR (71 aa)) enclose the S1-like domain.

The protein belongs to the IF-1 family. As to quaternary structure, component of the 30S ribosomal translation pre-initiation complex which assembles on the 30S ribosome in the order IF-2 and IF-3, IF-1 and N-formylmethionyl-tRNA(fMet); mRNA recruitment can occur at any time during PIC assembly.

The protein resides in the plastid. Its subcellular location is the chloroplast. One of the essential components for the initiation of protein synthesis. Stabilizes the binding of IF-2 and IF-3 on the 30S subunit to which N-formylmethionyl-tRNA(fMet) subsequently binds. Helps modulate mRNA selection, yielding the 30S pre-initiation complex (PIC). Upon addition of the 50S ribosomal subunit IF-1, IF-2 and IF-3 are released leaving the mature 70S translation initiation complex. The polypeptide is Translation initiation factor IF-1, chloroplastic (Montinia caryophyllacea (Wild clove bush)).